The sequence spans 447 residues: Delta(5) fatty acid desaturase fat-4 (447 aa).

The region spanning 1 to 80 (MVLREQEHEP…TQEPEIPDIK (80 aa)) is the Cytochrome b5 heme-binding domain. Transmembrane regions (helical) follow at residues 137–157 (IFTI…PSAI), 257–277 (WTFM…IFVS), 292–312 (IYEQ…LYFL), and 319–339 (IMFF…VVTF).

Belongs to the fatty acid desaturase type 1 family.

Its subcellular location is the membrane. It catalyses the reaction (11Z,14Z)-eicosadienoyl-CoA + 2 Fe(II)-[cytochrome b5] + O2 + 2 H(+) = (5Z,11Z,14Z)-eicosatrienoyl-CoA + 2 Fe(III)-[cytochrome b5] + 2 H2O. The enzyme catalyses (11Z,14Z,17Z)-eicosatrienoyl-CoA + 2 Fe(II)-[cytochrome b5] + O2 + 2 H(+) = (5Z,11Z,14Z,17Z)-eicosatetraenoyl-CoA + 2 Fe(III)-[cytochrome b5] + 2 H2O. It carries out the reaction (8Z,11Z,14Z,17Z)-eicosatetraenoyl-CoA + 2 Fe(II)-[cytochrome b5] + O2 + 2 H(+) = (5Z,8Z,11Z,14Z,17Z)-eicosapentaenoyl-CoA + 2 Fe(III)-[cytochrome b5] + 2 H2O. The catalysed reaction is (8Z,11Z,14Z)-eicosatrienoyl-CoA + 2 Fe(II)-[cytochrome b5] + O2 + 2 H(+) = (5Z,8Z,11Z,14Z)-eicosatetraenoyl-CoA + 2 Fe(III)-[cytochrome b5] + 2 H2O. It functions in the pathway lipid metabolism; polyunsaturated fatty acid biosynthesis. Functionally, can function as a Delta(5) fatty acid desaturase and behaves as a (8-3) desaturase. Introduces a double bond in the fatty acid chain 5 carbons away from carboxy terminal to biosynthesize polyunsaturated fatty acids (PUFAs) endogenously (PUFAs are essential for membrane structure and many cellular and physiological processes). Acts on a variety of substrates such as dihomo-gamma-linoleoyl-CoA ((8Z,11Z,14Z)-eicosatrienoyl-CoA, 20:3n-6) to generate arachidonoyl-CoA ((5Z,8Z,11Z,14Z)-eicosatetraenoyl-CoA, 20:4n-6). Also acts on a number of other substrates, including fatty acids that do not contain a double bond at the 8 position like (11Z,14Z,17Z)-eicosatrienoyl-CoA (20:3n-3) to produce (5Z,11Z,14Z,17Z)-eicosatetraenoyl-CoA (20:4n-3). Unlike plants, Caenorhabditis elegans desaturases seem to use fatty acyl-CoAs as substrates. This Caenorhabditis elegans protein is Delta(5) fatty acid desaturase fat-4 (fat-4).